A 638-amino-acid chain; its full sequence is Threonine--tRNA ligase (638 aa).

One can recognise a TGS domain in the interval 1–61 (MPVITLPDGS…EHDARIEIVT (61 aa)). Residues 243 to 534 (DHRKIAKAQD…LIEEYAGHFP (292 aa)) are catalytic. The Zn(2+) site is built by Cys334, His385, and His511.

This sequence belongs to the class-II aminoacyl-tRNA synthetase family. Homodimer. Zn(2+) is required as a cofactor.

The protein resides in the cytoplasm. The enzyme catalyses tRNA(Thr) + L-threonine + ATP = L-threonyl-tRNA(Thr) + AMP + diphosphate + H(+). Catalyzes the attachment of threonine to tRNA(Thr) in a two-step reaction: L-threonine is first activated by ATP to form Thr-AMP and then transferred to the acceptor end of tRNA(Thr). Also edits incorrectly charged L-seryl-tRNA(Thr). The sequence is that of Threonine--tRNA ligase from Idiomarina loihiensis (strain ATCC BAA-735 / DSM 15497 / L2-TR).